We begin with the raw amino-acid sequence, 382 residues long: MFGAELVGRETGGQSTDQPYSYRDSARTWDTVTQSVLKAPGWEDSYAVITIEADKHGNGAHQETVAPSDLRQYAKLANASQILYAPLIFVTKLSIFLLYLRVFASARRGMTYLSIHLLIWFNLAFYLANFFLKIFQCIPRAKIWDSNTSGHCININIPILVTAAINVVSDLLMLCLPIICVWRLQMSIRRKLGISAIFAAGIFGCFASIMRLEVSVRDRNTKDPTYDWYTEITCGILASCLPALPTFFRHFFGKARTMLSRSRTRGSSNRSQDRSLEKATELYTLTYPRGQKHHIITDNRLIDQDRELDDDRTQIFSGPSYAVTEARVEGRTPLGQRAYHGDDTVLNGEDGSGHCRGILKVVEVDVESGPGHPTVKCRCDNW.

The segment at 1–22 (MFGAELVGRETGGQSTDQPYSY) is disordered. N-linked (GlcNAc...) asparagine glycosylation is present at N78. Helical transmembrane passes span 80–100 (SQIL…LLYL) and 112–132 (YLSI…NFFL). N-linked (GlcNAc...) asparagine glycosylation occurs at N147. The next 3 helical transmembrane spans lie at 159 to 179 (ILVT…LPII), 192 to 212 (LGIS…IMRL), and 228 to 248 (WYTE…PTFF). N-linked (GlcNAc...) asparagine glycosylation occurs at N269.

The protein belongs to the SAT4 family.

Its subcellular location is the membrane. This is SAT4 family membrane protein from Emericella nidulans (strain FGSC A4 / ATCC 38163 / CBS 112.46 / NRRL 194 / M139) (Aspergillus nidulans).